The primary structure comprises 618 residues: Mitochondrial Rho GTPase 2 (618 aa).

The Cytoplasmic portion of the chain corresponds to 1–591; it reads MKRDVRILLL…LNAVELGAAS (591 aa). In terms of domain architecture, Miro 1 spans 2-168; sequence KRDVRILLLG…FYYAQKAVLH (167 aa). 4 residues coordinate GTP: Gly16, Lys17, Thr18, and Ser19. Position 18 (Thr18) interacts with Mg(2+). Mg(2+) contacts are provided by Pro35 and Asp57. GTP-binding residues include Ser59, Asn118, Lys119, Asp121, Ala149, and Lys150. EF-hand domains follow at residues 184 to 219 and 304 to 339; these read ACSR…CFGN and LGYQ…FPCM. Ca(2+) contacts are provided by Asp197, Asp199, Asn201, Glu208, Asp317, Asp319, Asp321, and Glu328. One can recognise a Miro 2 domain in the interval 416-579; sequence RNVFLCKVLG…YTKLATAATF (164 aa). GTP-binding residues include Gly428, Gly430, Lys431, Ser432, and Ala433. Residue Ser432 coordinates Mg(2+). Glu474 is a binding site for Mg(2+). GTP contacts are provided by Lys528, Asp530, and Cys559. The helical; Anchor for type IV membrane protein transmembrane segment at 592–614 threads the bilayer; that stretch reads FWLRVALGAAVTALVGFTLYRVL. The Mitochondrial intermembrane portion of the chain corresponds to 615 to 618; that stretch reads AKNK.

This sequence belongs to the mitochondrial Rho GTPase family. In terms of assembly, homodimer.

Its subcellular location is the mitochondrion outer membrane. The enzyme catalyses GTP + H2O = GDP + phosphate + H(+). It carries out the reaction ATP + H2O = ADP + phosphate + H(+). It catalyses the reaction UTP + H2O = UDP + phosphate + H(+). Atypical mitochondrial nucleoside-triphosphatase (NTPase) involved in mitochondrial trafficking. Probably involved in control of anterograde transport of mitochondria and their subcellular distribution. Can hydrolyze GTP, ATP and UTP. This Gallus gallus (Chicken) protein is Mitochondrial Rho GTPase 2 (RHOT2).